Consider the following 57-residue polypeptide: uncharacterized protein (57 aa).

The helical transmembrane segment at 15 to 37 threads the bilayer; that stretch reads GLAGLICIGLTISSGFSGSSILI.

It localises to the membrane. This is an uncharacterized protein from Dictyostelium discoideum (Social amoeba).